The sequence spans 426 residues: Fc receptor-like B (426 aa).

Residues Met1 to Ala17 form the signal peptide. 2 Ig-like C2-type domains span residues Pro23 to Ser101 and Asp103 to Thr189. Intrachain disulfides connect Cys44/Cys85 and Cys124/Cys168. Residue Asn152 is glycosylated (N-linked (GlcNAc...) asparagine). The segment at Glu400–Ser426 is disordered. Polar residues predominate over residues Glu406 to Ser426.

Expressed at low levels. Expressed in B-lymphocytes. Detected in tonsil, lung, kidney, spleen and placenta. Expressed by a small subset of germinal center B-cells in tonsils and by melanocytes (at protein level).

It is found in the cytoplasm. The protein localises to the endoplasmic reticulum. This chain is Fc receptor-like B (FCRLB), found in Homo sapiens (Human).